The chain runs to 469 residues: Sulfate adenylyltransferase subunit 1 (469 aa).

The tr-type G domain occupies 22–237; sequence KEVLRFITCG…LEEVPVKSEE (216 aa). Residues 31–38 are G1; it reads GSVDDGKS. 31-38 provides a ligand contact to GTP; the sequence is GSVDDGKS. Positions 89-93 are G2; that stretch reads GITID. The segment at 110–113 is G3; it reads DTPG. Residues 110-114 and 165-168 contribute to the GTP site; these read DTPGH and NKMD. Residues 165-168 are G4; sequence NKMD. Residues 202–204 form a G5 region; it reads SAK.

It belongs to the TRAFAC class translation factor GTPase superfamily. Classic translation factor GTPase family. CysN/NodQ subfamily. In terms of assembly, heterodimer composed of CysD, the smaller subunit, and CysN.

The enzyme catalyses sulfate + ATP + H(+) = adenosine 5'-phosphosulfate + diphosphate. It participates in sulfur metabolism; hydrogen sulfide biosynthesis; sulfite from sulfate: step 1/3. In terms of biological role, with CysD forms the ATP sulfurylase (ATPS) that catalyzes the adenylation of sulfate producing adenosine 5'-phosphosulfate (APS) and diphosphate, the first enzymatic step in sulfur assimilation pathway. APS synthesis involves the formation of a high-energy phosphoric-sulfuric acid anhydride bond driven by GTP hydrolysis by CysN coupled to ATP hydrolysis by CysD. The polypeptide is Sulfate adenylyltransferase subunit 1 (Methylorubrum extorquens (strain PA1) (Methylobacterium extorquens)).